The chain runs to 239 residues: tRNA (guanine-N(1)-)-methyltransferase (239 aa).

S-adenosyl-L-methionine is bound by residues glycine 108 and 127–132; that span reads LGDYVL.

It belongs to the RNA methyltransferase TrmD family. As to quaternary structure, homodimer.

The protein localises to the cytoplasm. The enzyme catalyses guanosine(37) in tRNA + S-adenosyl-L-methionine = N(1)-methylguanosine(37) in tRNA + S-adenosyl-L-homocysteine + H(+). Its function is as follows. Specifically methylates guanosine-37 in various tRNAs. This is tRNA (guanine-N(1)-)-methyltransferase from Streptococcus pneumoniae serotype 2 (strain D39 / NCTC 7466).